The primary structure comprises 236 residues: Mammalian ependymin-related protein 1 (236 aa).

The first 35 residues, 1-35, serve as a signal peptide directing secretion; sequence MPRRAPLRVARGSLDAWLLGGLWVCALGCLCGVGM. Disulfide bonds link cysteine 54–cysteine 184, cysteine 100–cysteine 234, and cysteine 125–cysteine 222. N-linked (GlcNAc...) asparagine glycosylation is found at asparagine 142 and asparagine 194.

This sequence belongs to the ependymin family. In terms of assembly, homodimer. N-glycosylated; the glycan contains mannose-6-phosphate moieties.

Its subcellular location is the lysosome lumen. The protein localises to the secreted. Functionally, binds anionic lipids and gangliosides at acidic pH. The protein is Mammalian ependymin-related protein 1 (EPDR1) of Bos taurus (Bovine).